Reading from the N-terminus, the 1067-residue chain is Carbamoyl phosphate synthase large chain (1067 aa).

A carboxyphosphate synthetic domain region spans residues 1-401 (MPLNKDIKKV…AFLKGIRSLE (401 aa)). ATP-binding residues include arginine 129, arginine 169, glycine 175, glycine 176, lysine 208, valine 210, glutamate 215, glycine 241, isoleucine 242, histidine 243, glutamine 284, and glutamate 298. The ATP-grasp 1 domain occupies 133–327 (RDMMNRINQP…IAKVAAKIAL (195 aa)). Residues glutamine 284, glutamate 298, and asparagine 300 each coordinate Mg(2+). The Mn(2+) site is built by glutamine 284, glutamate 298, and asparagine 300. Residues 402-549 (IGKYSLEHKK…YSTYEQYDEV (148 aa)) form an oligomerization domain region. The carbamoyl phosphate synthetic domain stretch occupies residues 550-932 (VVSDNKKVVV…ALYKGFVGAS (383 aa)). Positions 674–864 (DDLLERLNIA…IVDIATRIML (191 aa)) constitute an ATP-grasp 2 domain. ATP-binding residues include arginine 710, lysine 749, leucine 751, glutamate 755, glycine 780, valine 781, histidine 782, serine 783, glutamine 823, and glutamate 835. Mg(2+) is bound by residues glutamine 823, glutamate 835, and asparagine 837. Mn(2+) contacts are provided by glutamine 823, glutamate 835, and asparagine 837. The MGS-like domain maps to 933–1067 (MYTGDKGKTI…NRELEVFNLI (135 aa)). The segment at 933-1067 (MYTGDKGKTI…NRELEVFNLI (135 aa)) is allosteric domain.

The protein belongs to the CarB family. In terms of assembly, composed of two chains; the small (or glutamine) chain promotes the hydrolysis of glutamine to ammonia, which is used by the large (or ammonia) chain to synthesize carbamoyl phosphate. Tetramer of heterodimers (alpha,beta)4. The cofactor is Mg(2+). It depends on Mn(2+) as a cofactor.

The catalysed reaction is hydrogencarbonate + L-glutamine + 2 ATP + H2O = carbamoyl phosphate + L-glutamate + 2 ADP + phosphate + 2 H(+). It carries out the reaction hydrogencarbonate + NH4(+) + 2 ATP = carbamoyl phosphate + 2 ADP + phosphate + 2 H(+). Its pathway is amino-acid biosynthesis; L-arginine biosynthesis; carbamoyl phosphate from bicarbonate: step 1/1. The protein operates within pyrimidine metabolism; UMP biosynthesis via de novo pathway; (S)-dihydroorotate from bicarbonate: step 1/3. Its function is as follows. Large subunit of the glutamine-dependent carbamoyl phosphate synthetase (CPSase). CPSase catalyzes the formation of carbamoyl phosphate from the ammonia moiety of glutamine, carbonate, and phosphate donated by ATP, constituting the first step of 2 biosynthetic pathways, one leading to arginine and/or urea and the other to pyrimidine nucleotides. The large subunit (synthetase) binds the substrates ammonia (free or transferred from glutamine from the small subunit), hydrogencarbonate and ATP and carries out an ATP-coupled ligase reaction, activating hydrogencarbonate by forming carboxy phosphate which reacts with ammonia to form carbamoyl phosphate. The sequence is that of Carbamoyl phosphate synthase large chain from Clostridium perfringens (strain SM101 / Type A).